The chain runs to 160 residues: Biogenesis of lysosome-related organelles complex 1 subunit 5 (160 aa).

Belongs to the BLOC1S5 family. In terms of assembly, component of the biogenesis of lysosome-related organelles complex-1 (BLOC-1) composed of Blos1, Blos2, Blos3, Blos4, Dysb, Muted, Pldn and Snapin.

Component of the biogenesis of lysosome-related organelles complex-1 (BLOC-1) involved in pigment granule biogenesis. The chain is Biogenesis of lysosome-related organelles complex 1 subunit 5 from Drosophila melanogaster (Fruit fly).